Reading from the N-terminus, the 474-residue chain is L-arabinose isomerase (474 aa).

Residues E306, E331, H348, and H447 each coordinate Mn(2+).

It belongs to the arabinose isomerase family. Requires Mn(2+) as cofactor.

The enzyme catalyses beta-L-arabinopyranose = L-ribulose. Its pathway is carbohydrate degradation; L-arabinose degradation via L-ribulose; D-xylulose 5-phosphate from L-arabinose (bacterial route): step 1/3. Its function is as follows. Catalyzes the conversion of L-arabinose to L-ribulose. In Oceanobacillus iheyensis (strain DSM 14371 / CIP 107618 / JCM 11309 / KCTC 3954 / HTE831), this protein is L-arabinose isomerase.